The following is a 195-amino-acid chain: ATP-dependent Clp protease proteolytic subunit (195 aa).

Residue Ser-97 is the Nucleophile of the active site. The active site involves His-122.

This sequence belongs to the peptidase S14 family. As to quaternary structure, fourteen ClpP subunits assemble into 2 heptameric rings which stack back to back to give a disk-like structure with a central cavity, resembling the structure of eukaryotic proteasomes.

The protein localises to the cytoplasm. It carries out the reaction Hydrolysis of proteins to small peptides in the presence of ATP and magnesium. alpha-casein is the usual test substrate. In the absence of ATP, only oligopeptides shorter than five residues are hydrolyzed (such as succinyl-Leu-Tyr-|-NHMec, and Leu-Tyr-Leu-|-Tyr-Trp, in which cleavage of the -Tyr-|-Leu- and -Tyr-|-Trp bonds also occurs).. In terms of biological role, cleaves peptides in various proteins in a process that requires ATP hydrolysis. Has a chymotrypsin-like activity. Plays a major role in the degradation of misfolded proteins. This Lactobacillus gasseri (strain ATCC 33323 / DSM 20243 / BCRC 14619 / CIP 102991 / JCM 1131 / KCTC 3163 / NCIMB 11718 / NCTC 13722 / AM63) protein is ATP-dependent Clp protease proteolytic subunit.